A 251-amino-acid chain; its full sequence is ATP synthase delta chain, chloroplastic (251 aa).

The N-terminal 64 residues, 1–64 (MASLQHTTAS…STGGALGARM (64 aa)), are a transit peptide targeting the chloroplast.

The protein belongs to the ATPase delta chain family. As to quaternary structure, F-type ATPases have 2 components, CF(1) - the catalytic core - and CF(0) - the membrane proton channel. CF(1) has five subunits: alpha(3), beta(3), gamma(1), delta(1), epsilon(1). CF(0) has three main subunits: a, b and c.

It localises to the plastid. It is found in the chloroplast thylakoid membrane. Functionally, this protein seems to be part of the stalk that links CF(0) to CF(1). It either transmits conformational changes from CF(0) into CF(1) or is implicated in proton conduction. This chain is ATP synthase delta chain, chloroplastic (ATPD), found in Pisum sativum (Garden pea).